Consider the following 307-residue polypeptide: Recombination-associated protein RdgC (307 aa).

It belongs to the RdgC family.

The protein resides in the cytoplasm. It localises to the nucleoid. May be involved in recombination. This Colwellia psychrerythraea (strain 34H / ATCC BAA-681) (Vibrio psychroerythus) protein is Recombination-associated protein RdgC.